We begin with the raw amino-acid sequence, 343 residues long: MDQGQTLSRLLDSYGTDARTRAVAAAVGAIAEASIEISDLIGQGALAGITGAAHGASNADGDVQKDLDVRAEAAIVAALKNVPYAALASEESDTLLMGDPQAPISIAYDPLDGSSNIDTNMTVGTIFSVIPNEPGVAPFTAPGSCQLAAGFVVYGPQTSLVLTLGDGVDIFTLDRAAKTYRLIRERVQVPADTAEYAINASNHRHWEQPVRDFVDECLAGTDGPRAKNFNMRWIGSLVAEAYRILTRGGVFLYPADSRPGYGEGRLRVLYETHPMAFVMEQAGGAASTGRERVLDVVASTTHQRSPLIMGSSDKVHRIVELHLDPAAASRTAPLFGRRGLFRT.

Glu-90, Asp-109, Leu-111, and Asp-112 together coordinate Mg(2+). Residues 112-115 (DGSS) and Asn-199 contribute to the substrate site. Glu-271 serves as a coordination point for Mg(2+).

This sequence belongs to the FBPase class 1 family. In terms of assembly, homotetramer. Mg(2+) serves as cofactor.

The protein resides in the cytoplasm. The enzyme catalyses beta-D-fructose 1,6-bisphosphate + H2O = beta-D-fructose 6-phosphate + phosphate. It participates in carbohydrate biosynthesis; Calvin cycle. The protein is Fructose-1,6-bisphosphatase class 1 of Rhodopseudomonas palustris (strain HaA2).